The primary structure comprises 392 residues: tRNA (guanine-N(7)-)-methyltransferase (392 aa).

Residues E123, E148, and D175 each coordinate S-adenosyl-L-methionine. 2 residues coordinate substrate: K201 and D231.

The protein belongs to the class I-like SAM-binding methyltransferase superfamily. TrmB family.

It catalyses the reaction guanosine(46) in tRNA + S-adenosyl-L-methionine = N(7)-methylguanosine(46) in tRNA + S-adenosyl-L-homocysteine. It participates in tRNA modification; N(7)-methylguanine-tRNA biosynthesis. Functionally, catalyzes the formation of N(7)-methylguanine at position 46 (m7G46) in tRNA. The protein is tRNA (guanine-N(7)-)-methyltransferase of Campylobacter jejuni subsp. jejuni serotype O:2 (strain ATCC 700819 / NCTC 11168).